A 618-amino-acid polypeptide reads, in one-letter code: Glucose starvation modulator protein 1 (618 aa).

A DNA-binding region (zn(2)-C6 fungal-type) is located at residues 20 to 48; sequence CEFCHTKHIQCDVGRPCQNCLKRNIGKFC. Positions 325 to 352 are disordered; sequence ANANTHPSHNAKLESECDSSSHSDADLE. Residues 335–352 are compositionally biased toward basic and acidic residues; it reads AKLESECDSSSHSDADLE. The PAS domain maps to 466-538; that stretch reads LLDLENMAKL…QIFNELLAFG (73 aa).

Belongs to the ERT1/acuK family.

Its subcellular location is the nucleus. Transcription factor which regulates nonfermentable carbon utilization. Binds specifically to 5'-CGGN(8)CGG-3' and 5'-CGGN(9)CGG-3' sequences in the promoter region. This chain is Glucose starvation modulator protein 1 (GSM1), found in Saccharomyces cerevisiae (strain RM11-1a) (Baker's yeast).